Here is a 190-residue protein sequence, read N- to C-terminus: NADH-ubiquinone oxidoreductase chain 5 (190 aa).

The next 6 membrane-spanning stretches (helical) occupy residues M1–V21, I68–L88, N94–F114, F118–L138, N146–S166, and L167–M187.

Belongs to the complex I subunit 5 family.

It is found in the mitochondrion inner membrane. The enzyme catalyses a ubiquinone + NADH + 5 H(+)(in) = a ubiquinol + NAD(+) + 4 H(+)(out). Core subunit of the mitochondrial membrane respiratory chain NADH dehydrogenase (Complex I) that is believed to belong to the minimal assembly required for catalysis. Complex I functions in the transfer of electrons from NADH to the respiratory chain. The immediate electron acceptor for the enzyme is believed to be ubiquinone. In Arbacia lixula (Black urchin), this protein is NADH-ubiquinone oxidoreductase chain 5 (ND5).